A 728-amino-acid chain; its full sequence is Catalase-peroxidase (728 aa).

Positions 1 to 19 are cleaved as a signal peptide; sequence MSTEAKCPVTGGATRSSSA. Residues 1 to 20 are disordered; it reads MSTEAKCPVTGGATRSSSAG. A cross-link (tryptophyl-tyrosyl-methioninium (Trp-Tyr) (with M-245)) is located at residues 96–219; it reads WHAAGTYRIG…LAAVQMGLIY (124 aa). Histidine 97 acts as the Proton acceptor in catalysis. The tryptophyl-tyrosyl-methioninium (Tyr-Met) (with W-96) cross-link spans 219–245; sequence YVNPEGPNGKPDPVAAARDIRETFARM. A heme b-binding site is contributed by histidine 260.

The protein belongs to the peroxidase family. Peroxidase/catalase subfamily. In terms of assembly, homodimer or homotetramer. The cofactor is heme b. In terms of processing, formation of the three residue Trp-Tyr-Met cross-link is important for the catalase, but not the peroxidase activity of the enzyme.

The catalysed reaction is H2O2 + AH2 = A + 2 H2O. The enzyme catalyses 2 H2O2 = O2 + 2 H2O. In terms of biological role, bifunctional enzyme with both catalase and broad-spectrum peroxidase activity. The sequence is that of Catalase-peroxidase from Acidiphilium cryptum (strain JF-5).